The following is a 203-amino-acid chain: SPbeta prophage-derived uncharacterized lipoprotein YonS (203 aa).

An N-terminal signal peptide occupies residues 1–21 (MKLFKKLGILLLITSLILLAA). The N-palmitoyl cysteine moiety is linked to residue Cys-22. Cys-22 carries S-diacylglycerol cysteine lipidation. Low complexity predominate over residues 27–46 (ESSSSSEDTNNATDTNTSES). Residues 27–57 (ESSSSSEDTNNATDTNTSESQDISVNGPEKV) form a disordered region.

It localises to the cell membrane. The chain is SPbeta prophage-derived uncharacterized lipoprotein YonS (yonS) from Bacillus subtilis (strain 168).